The chain runs to 647 residues: tRNA uridine 5-carboxymethylaminomethyl modification enzyme MnmG (647 aa).

FAD-binding positions include 22–27, Val-134, and Ser-189; that span reads GAGHAG. 283–297 is a binding site for NAD(+); sequence GARYCPSIEDKIMRF. Gln-380 contributes to the FAD binding site.

It belongs to the MnmG family. Homodimer. Heterotetramer of two MnmE and two MnmG subunits. FAD serves as cofactor.

The protein localises to the cytoplasm. Functionally, NAD-binding protein involved in the addition of a carboxymethylaminomethyl (cmnm) group at the wobble position (U34) of certain tRNAs, forming tRNA-cmnm(5)s(2)U34. The polypeptide is tRNA uridine 5-carboxymethylaminomethyl modification enzyme MnmG (Desulfotalea psychrophila (strain LSv54 / DSM 12343)).